The chain runs to 273 residues: MKRSVPDLMNASEPLVMVTAYDYPGARHAEAAGVDLILVGDSLGNVVLGYDSTAPVTLDDMIHHARAVRRGAPNTFLVVDLPFGTYHTGVTDAMRNAVRVIQQTGADAVKLEGATPEVLDVVGVLARNGIPVMGHVGLMPQTATAQGGLKVQGRDEASARRTLEGALALEAAGAFSVVLEAIPARLARLITERLHVPTIGIGAGVHCRGQVLVYHDLLGLYEGDEKKLAKRYAELGKEAREAIAAYAREVRAREFPTKDQSFVMKDDVLGKLY.

2 residues coordinate Mg(2+): D41 and D80. Residues 41–42 (DS), D80, and K110 contribute to the 3-methyl-2-oxobutanoate site. E112 serves as a coordination point for Mg(2+). The Proton acceptor role is filled by E180.

This sequence belongs to the PanB family. As to quaternary structure, homodecamer; pentamer of dimers. Mg(2+) is required as a cofactor.

Its subcellular location is the cytoplasm. The catalysed reaction is 3-methyl-2-oxobutanoate + (6R)-5,10-methylene-5,6,7,8-tetrahydrofolate + H2O = 2-dehydropantoate + (6S)-5,6,7,8-tetrahydrofolate. It participates in cofactor biosynthesis; (R)-pantothenate biosynthesis; (R)-pantoate from 3-methyl-2-oxobutanoate: step 1/2. In terms of biological role, catalyzes the reversible reaction in which hydroxymethyl group from 5,10-methylenetetrahydrofolate is transferred onto alpha-ketoisovalerate to form ketopantoate. In Deinococcus geothermalis (strain DSM 11300 / CIP 105573 / AG-3a), this protein is 3-methyl-2-oxobutanoate hydroxymethyltransferase.